The sequence spans 326 residues: Interleukin-1-binding protein (326 aa).

Residues 1–18 form the signal peptide; it reads MSIPPVIFLPIFFYSSFV. Ig-like C2-type domains follow at residues 24–115, 122–208, and 221–322; these read PECI…LNLT, SNID…YDVT, and PPTM…KTVT. Cysteine 48 and cysteine 99 are disulfide-bonded. N-linked (GlcNAc...) asparagine; by host glycosylation is found at asparagine 80, asparagine 103, and asparagine 113. An intrachain disulfide couples cysteine 143 to cysteine 194. Residue asparagine 237 is glycosylated (N-linked (GlcNAc...) asparagine; by host). The cysteines at positions 242 and 309 are disulfide-linked.

It belongs to the interleukin-1 receptor family. As to quaternary structure, interacts with mouse Il1b.

Its subcellular location is the secreted. Functionally, may reduce the host inflammatory response by interacting with inteleukin-1 beta (Il1b) and thus decreasing the association between IL1B and its cellular receptor. This chain is Interleukin-1-binding protein (OPG201), found in Bos taurus (Bovine).